The primary structure comprises 111 residues: MTFVPTDFLIRTPDDPAYFKDRLASPFSFRGCSKTTSTSSSIYSKKKASTATYFRVDPVPRGSQSSRVCEPKTKLIVYQPGNYQKKVKRQVTDPLSLMDKVKKRIDKTEIL.

The protein resides in the mitochondrion. This is an uncharacterized protein from Arabidopsis thaliana (Mouse-ear cress).